A 185-amino-acid polypeptide reads, in one-letter code: MTTRCPWVGEQSIYIDYHDKEWGKPEFDSQKLFEKICLEGQQAGLSWITVLKKRESYREAFHQFDPKKIAKMTALDIDACMQNSGLIRHRAKLEAIVKNAKAYLAMEKCGENFSDFIWSFVNHKPIVNDVPDLRSVPTKTEVSKALSKALKKRGFVFIGETTCYAFMQSMGLVDDHLNDCPCKTS.

Residues Cys-5, Asp-19, His-176, and Cys-180 each coordinate Zn(2+).

The catalysed reaction is Hydrolysis of alkylated DNA, releasing 3-methyladenine.. In terms of biological role, hydrolysis of the deoxyribose N-glycosidic bond to excise 3-methyladenine from the damaged DNA polymer formed by alkylation lesions. The polypeptide is DNA-3-methyladenine glycosylase (tag) (Haemophilus influenzae (strain ATCC 51907 / DSM 11121 / KW20 / Rd)).